Consider the following 65-residue polypeptide: Large ribosomal subunit protein bL35 (65 aa).

A disordered region spans residues 1–52 (MPKMKSNRAAAKRFKRTANGGFKSGNSFTSHRFHGKTKKQRRQLRGLSMMDK). The segment covering 31–44 (HRFHGKTKKQRRQL) has biased composition (basic residues).

The protein belongs to the bacterial ribosomal protein bL35 family.

This chain is Large ribosomal subunit protein bL35, found in Limosilactobacillus reuteri (strain DSM 20016) (Lactobacillus reuteri).